The sequence spans 63 residues: ATP synthase F(0) complex subunit 8 (63 aa).

A helical transmembrane segment spans residues 8–24 (TWFLTILSVMLTLFTLL). An N6-acetyllysine modification is found at lysine 57.

Belongs to the ATPase protein 8 family. As to quaternary structure, component of the ATP synthase complex composed at least of ATP5F1A/subunit alpha, ATP5F1B/subunit beta, ATP5MC1/subunit c (homooctomer), MT-ATP6/subunit a, MT-ATP8/subunit 8, ATP5ME/subunit e, ATP5MF/subunit f, ATP5MG/subunit g, ATP5MK/subunit k, ATP5MJ/subunit j, ATP5F1C/subunit gamma, ATP5F1D/subunit delta, ATP5F1E/subunit epsilon, ATP5PF/subunit F6, ATP5PB/subunit b, ATP5PD/subunit d, ATP5PO/subunit OSCP. ATP synthase complex consists of a soluble F(1) head domain (subunits alpha(3) and beta(3)) - the catalytic core - and a membrane F(0) domain - the membrane proton channel (subunits c, a, 8, e, f, g, k and j). These two domains are linked by a central stalk (subunits gamma, delta, and epsilon) rotating inside the F1 region and a stationary peripheral stalk (subunits F6, b, d, and OSCP). Interacts with PRICKLE3.

It localises to the mitochondrion membrane. In terms of biological role, subunit 8, of the mitochondrial membrane ATP synthase complex (F(1)F(0) ATP synthase or Complex V) that produces ATP from ADP in the presence of a proton gradient across the membrane which is generated by electron transport complexes of the respiratory chain. ATP synthase complex consist of a soluble F(1) head domain - the catalytic core - and a membrane F(1) domain - the membrane proton channel. These two domains are linked by a central stalk rotating inside the F(1) region and a stationary peripheral stalk. During catalysis, ATP synthesis in the catalytic domain of F(1) is coupled via a rotary mechanism of the central stalk subunits to proton translocation. In vivo, can only synthesize ATP although its ATP hydrolase activity can be activated artificially in vitro. Part of the complex F(0) domain. The polypeptide is ATP synthase F(0) complex subunit 8 (Physeter macrocephalus (Sperm whale)).